The sequence spans 95 residues: uncharacterized protein (95 aa).

2 consecutive repeat copies span residues 67–74 (GCGCGCGC) and 85–92 (CGGCCGCG). The tract at residues 67–92 (GCGCGCGCATVAAVSPVPCGGCCGCG) is 2 X 8 AA approximate repeats.

This is an uncharacterized protein from Caenorhabditis elegans.